The chain runs to 765 residues: Kinesin-like protein KIN-14S (765 aa).

In terms of domain architecture, Kinesin motor spans 132-456; sequence NIRVFCRCRP…LNFASRVRGI (325 aa). Residue 215–222 coordinates ATP; the sequence is GQTGTGKT. The stretch at 469-534 forms a coiled coil; that stretch reads ELLKSKQMAE…ERKTRIKQES (66 aa). Disordered regions lie at residues 581–613 and 654–678; these read MPQQ…SSMD and LRPE…RGDP. A compositionally biased stretch (low complexity) spans 602–611; sequence NNNSNRRSSS.

The protein belongs to the TRAFAC class myosin-kinesin ATPase superfamily. Kinesin family. KIN-14 subfamily.

This is Kinesin-like protein KIN-14S from Arabidopsis thaliana (Mouse-ear cress).